A 283-amino-acid chain; its full sequence is Putative F-box protein At1g60370 (283 aa).

One can recognise an F-box domain in the interval 4–53 (GEKLESIPIDLIIEIHSRLPAESVARFRCVSKLWGSMFRRPYFTELFLTR).

The sequence is that of Putative F-box protein At1g60370 from Arabidopsis thaliana (Mouse-ear cress).